Reading from the N-terminus, the 213-residue chain is Small ribosomal subunit protein uS4 (213 aa).

The 69-residue stretch at 97-165 folds into the S4 RNA-binding domain; it reads RRLDNVVYRM…AKEQLRIKNA (69 aa).

It belongs to the universal ribosomal protein uS4 family. In terms of assembly, part of the 30S ribosomal subunit. Contacts protein S5. The interaction surface between S4 and S5 is involved in control of translational fidelity.

Its function is as follows. One of the primary rRNA binding proteins, it binds directly to 16S rRNA where it nucleates assembly of the body of the 30S subunit. With S5 and S12 plays an important role in translational accuracy. This is Small ribosomal subunit protein uS4 from Psychrobacter sp. (strain PRwf-1).